The following is a 492-amino-acid chain: Protein adenylyltransferase Fic (492 aa).

Positions 1-17 (MCTEAEQPSPPAQQQEQ) are enriched in low complexity. A disordered region spans residues 1-25 (MCTEAEQPSPPAQQQEQGNPPLCKA). The helical transmembrane segment at 33-55 (LYRLVLLFVAGSLAAWTFHALSS) threads the bilayer. TPR repeat units lie at residues 118–151 (ALGA…APRH) and 152–186 (PEVL…SPSN). An Inhibitory (S/T)XXXE(G/N) motif motif is present at residues 243–248 (SVGIEG). Residues Glu-247 and 328-331 (VGGH) each bind ATP. The region spanning 297-432 (ITIKDILELH…IRPFVRFIAD (136 aa)) is the Fido domain. Residue His-375 is part of the active site. Residues 379 to 386 (DGNGRTSR), 411 to 412 (YY), and Asn-419 contribute to the ATP site.

Belongs to the fic family. In terms of assembly, homodimer.

It is found in the membrane. It catalyses the reaction L-tyrosyl-[protein] + ATP = O-(5'-adenylyl)-L-tyrosyl-[protein] + diphosphate. The enzyme catalyses L-threonyl-[protein] + ATP = 3-O-(5'-adenylyl)-L-threonyl-[protein] + diphosphate. It carries out the reaction 3-O-(5'-adenylyl)-L-threonyl-[protein] + H2O = L-threonyl-[protein] + AMP + H(+). The side chain of Glu-247 determines which of the two opposing activities (AMPylase or de-AMPylase) will take place. In response to endoplasmic reticulum stress, mediates de-AMPylase activity. Adenylyltransferase activity is inhibited by the inhibitory helix present at the N-terminus: Glu-247 binds ATP and competes with ATP-binding at Arg-386, thereby preventing adenylyltransferase activity. In unstressed cells, disengagement of Glu-247 promotes adenylyltransferase activity. Activation dissociates ATP-binding from Glu-247, allowing ordered binding of the entire ATP moiety with the alpha-phosphate in an orientation that is productive for accepting an incoming target hydroxyl side chain. Protein that can both mediate the addition of adenosine 5'-monophosphate (AMP) to specific residues of target proteins (AMPylation), and the removal of the same modification from target proteins (de-AMPylation), depending on the context. The side chain of Glu-247 determines which of the two opposing activities (AMPylase or de-AMPylase) will take place. Acts as a key regulator of the unfolded protein response (UPR) by mediating AMPylation or de-AMPylation of Hsc70-3/BiP. In unstressed cells, acts as an adenylyltransferase by mediating AMPylation of Hsc70-3/BiP at 'Thr-518', thereby inactivating it. In response to endoplasmic reticulum stress, acts as a phosphodiesterase by mediating removal of ATP (de-AMPylation) from Hsc70-3/BiP at 'Thr-518', leading to restore HSPA5/BiP activity. This is Protein adenylyltransferase Fic from Drosophila sechellia (Fruit fly).